The following is a 62-amino-acid chain: Large ribosomal subunit protein bL28 (62 aa).

This sequence belongs to the bacterial ribosomal protein bL28 family.

The protein is Large ribosomal subunit protein bL28 of Streptococcus agalactiae serotype Ia (strain ATCC 27591 / A909 / CDC SS700).